We begin with the raw amino-acid sequence, 360 residues long: MARRPRNSRAWRFVLSGVRRDQDGRSPALHAEEEAWGYDSDGQHSNSDSDTDLLTLPPSIPSAVPVTGESYCDCDSQNDPYCSSLHPFRQIKSCQCGEEDNYFDWVWDDCSKSTATVLSCDDRKVSFHMEYSCGTAAIRGNKMLTEGQHFWEIKMTSPVYGTDMMVGIGTSDVNLDKYRHTFCSLLGKDAESWGLSYTGLLQHKGDKSNFSSRFGQGSIIGVHLDTWHGVLTFYKNRKRIGVAATQLRNKKLFPLVCSTAAKSSMKVIRSCCCRTSLQYLCCARLRQLLPGSVDSLEVLPLPPGLKQVLSNKLGWVLQMGSNRSSQHKGDGSATTSCGSYSDSSCTPGHDNCQRKRCRRI.

The disordered stretch occupies residues D21–L54. A B30.2/SPRY domain is found at S84 to R274. Positions S264 to W315 constitute an SOCS box domain. Residues N322 to D350 are disordered. The span at S332–T346 shows a compositional bias: polar residues.

The protein belongs to the SPSB family. Substrate-recognition component of the ECS(SPSB3) complex, composed of spsb3, cul5, elob, elob and rnf7/rbx2.

Its subcellular location is the nucleus. Its pathway is protein modification; protein ubiquitination. Substrate-recognition component of a cullin-5-RING E3 ubiquitin-protein ligase complex (ECS complex, also named CRL5 complex), which mediates the ubiquitination and subsequent proteasomal degradation of target proteins. This chain is SPRY domain-containing SOCS box protein 3 (spsb3), found in Xenopus laevis (African clawed frog).